A 129-amino-acid polypeptide reads, in one-letter code: Glycine cleavage system H protein (129 aa).

In terms of domain architecture, Lipoyl-binding spans 24-106 (TYTVGITEHA…YAGGWIFKIK (83 aa)). Lys65 carries the N6-lipoyllysine modification.

It belongs to the GcvH family. In terms of assembly, the glycine cleavage system is composed of four proteins: P, T, L and H. (R)-lipoate is required as a cofactor.

Functionally, the glycine cleavage system catalyzes the degradation of glycine. The H protein shuttles the methylamine group of glycine from the P protein to the T protein. This is Glycine cleavage system H protein from Escherichia coli O139:H28 (strain E24377A / ETEC).